Consider the following 270-residue polypeptide: 5'-AMP-activated protein kinase subunit beta-1 (270 aa).

Positions 1–43 (MGNTSSERAALERHGGHKTPRRDSSGGTKDGDRPKILMDSPED) are disordered. G2 carries the N-myristoyl glycine lipid modification. T4 carries the post-translational modification Phosphothreonine. Phosphoserine occurs at positions 5 and 6. T19 carries the post-translational modification Phosphothreonine. The span at 21-36 (RRDSSGGTKDGDRPKI) shows a compositional bias: basic and acidic residues. 2 positions are modified to phosphoserine; by autocatalysis: S24 and S25. 4 positions are modified to phosphoserine: S40, S96, S101, and S108. The glycogen-binding domain stretch occupies residues 68–163 (EVNDKAPAQA…QVKKTDFEVF (96 aa)). T148 carries the post-translational modification Phosphothreonine. S182 is modified (phosphoserine).

The protein belongs to the 5'-AMP-activated protein kinase beta subunit family. As to quaternary structure, AMPK is a heterotrimer of an alpha catalytic subunit (PRKAA1 or PRKAA2), a beta (PRKAB1 or PRKAB2) and a gamma non-catalytic subunits (PRKAG1, PRKAG2 or PRKAG3). Interacts with FNIP1 and FNIP2. Phosphorylated when associated with the catalytic subunit (PRKAA1 or PRKAA2). Phosphorylated by ULK1; leading to negatively regulate AMPK activity and suggesting the existence of a regulatory feedback loop between ULK1 and AMPK.

In terms of biological role, non-catalytic subunit of AMP-activated protein kinase (AMPK), an energy sensor protein kinase that plays a key role in regulating cellular energy metabolism. In response to reduction of intracellular ATP levels, AMPK activates energy-producing pathways and inhibits energy-consuming processes: inhibits protein, carbohydrate and lipid biosynthesis, as well as cell growth and proliferation. AMPK acts via direct phosphorylation of metabolic enzymes, and by longer-term effects via phosphorylation of transcription regulators. Also acts as a regulator of cellular polarity by remodeling the actin cytoskeleton; probably by indirectly activating myosin. Beta non-catalytic subunit acts as a scaffold on which the AMPK complex assembles, via its C-terminus that bridges alpha (PRKAA1 or PRKAA2) and gamma subunits (PRKAG1, PRKAG2 or PRKAG3). This chain is 5'-AMP-activated protein kinase subunit beta-1 (PRKAB1), found in Homo sapiens (Human).